Here is a 956-residue protein sequence, read N- to C-terminus: DNA polymerase I (956 aa).

The 88-residue stretch at 209 to 296 folds into the 5'-3' exonuclease domain; it reads VTVRQWVDYR…VTDLPLDIEF (88 aa).

This sequence belongs to the DNA polymerase type-A family. Single-chain monomer with multiple functions.

It catalyses the reaction DNA(n) + a 2'-deoxyribonucleoside 5'-triphosphate = DNA(n+1) + diphosphate. Its function is as follows. A DNA polymerase, required for DNA repair after DNA damage induced by ionizing radiation (IR); this is not the major DNA polymerase. Following severe irradiation (7 kGy of gamma irradiation) genomic DNA is fragmented. DNA is progressively degraded for the first 1.5 hours after IR, in a step promoted by RecA and counterbalanced by DNA Pol I and Pol III, followed by massive DNA synthesis and genome reassembly in the next hour. Optimal priming of DNA synthesis requires both RecA and RadA, Pol III initiates DNA synthesis while both Pol I and Pol III are required for its continuation. May also have 5'-3' exonuclease activity. The protein is DNA polymerase I (polA) of Deinococcus radiodurans (strain ATCC 13939 / DSM 20539 / JCM 16871 / CCUG 27074 / LMG 4051 / NBRC 15346 / NCIMB 9279 / VKM B-1422 / R1).